Reading from the N-terminus, the 132-residue chain is uncharacterized protein (132 aa).

Residues 1-34 (MTAGAGGSPPTRRCPATEDRAPATVATPSSADPT) form a disordered region.

To M.tuberculosis Rv2656c.

This is an uncharacterized protein from Mycobacterium tuberculosis (strain CDC 1551 / Oshkosh).